A 507-amino-acid chain; its full sequence is tRNA (guanine(10)-N(2))-methyltransferase TRMT11 (507 aa).

A compositionally biased stretch (basic and acidic residues) spans 459 to 475; that stretch reads EKTKKKEQKKKSVENHL. The disordered stretch occupies residues 459–507; it reads EKTKKKEQKKKSVENHLKSKNNNDVINNNSNDTNSNNNCNNENNIENQK. A compositionally biased stretch (low complexity) spans 480-507; the sequence is NNDVINNNSNDTNSNNNCNNENNIENQK.

The protein belongs to the class I-like SAM-binding methyltransferase superfamily. TRM11 methyltransferase family. In terms of assembly, part of the heterodimeric TRMT11-TRM112 methyltransferase complex; this complex forms an active tRNA methyltransferase, where TRMT112 acts as an activator of the catalytic subunit TRMT11.

Its subcellular location is the cytoplasm. It catalyses the reaction guanosine(10) in tRNA + S-adenosyl-L-methionine = N(2)-methylguanosine(10) in tRNA + S-adenosyl-L-homocysteine + H(+). Functionally, catalytic subunit of the TRMT11-TRM112 methyltransferase complex, that specifically mediates the S-adenosyl-L-methionine-dependent N(2)-methylation of guanosine nucleotide at position 10 (m2G10) in tRNAs. This is one of the major tRNA (guanine-N(2))-methyltransferases. The protein is tRNA (guanine(10)-N(2))-methyltransferase TRMT11 (trmt11) of Dictyostelium discoideum (Social amoeba).